The primary structure comprises 223 residues: GTP cyclohydrolase 1 (223 aa).

Zn(2+) contacts are provided by Cys114, His117, and Cys185.

It belongs to the GTP cyclohydrolase I family. As to quaternary structure, homomer.

The enzyme catalyses GTP + H2O = 7,8-dihydroneopterin 3'-triphosphate + formate + H(+). Its pathway is cofactor biosynthesis; 7,8-dihydroneopterin triphosphate biosynthesis; 7,8-dihydroneopterin triphosphate from GTP: step 1/1. The polypeptide is GTP cyclohydrolase 1 (Chlorobium phaeovibrioides (strain DSM 265 / 1930) (Prosthecochloris vibrioformis (strain DSM 265))).